The sequence spans 660 residues: MVEHYHSTYYYEIAINIPLNKLFFYKFNLNLEIGIRVMVNFNGSNKIGIIIKKYFENEFKEKFEFKIKEIIKIIDTTKIITEHNIDLAHWISKKTFSGFGETLFFGLPQNSKAKKNQTLPSINEHPDHKKCLELNNEQQNIYKEIIGSEKTNVFYLFGIPGSGKTEIFIKLCEYYLALEQQVLFLIPEISLGYQIIKRIKYALNMHHKIYEYNSKVPNSDKNLIWNKVKNGESLVVIGIKSVLMLPFTKLKLIIMDEEHETTYKSENIPRFHSRHISFFLQKKFNAKFVMGSATPSLEAYHAMKNNQIKKIIMQNKFSQSKIEDIKIINMKKEPSTISSELLYSIQKSLNEKRQSLIFINKRGYLKNLECNECGHIICCPNCSFGLIYHKKENKLLCHYCSYKTKTASHCPQCESKDIKYKTYGIQLVEKELKKFLPNAKIARIDSDITKIENIDSINKFENKEIDILIGTQIIAKGFNFENIKTLGIINADIGMGLPDFRSGERIFTTLSQIMGRAARFKDDNIIIIQTKNPNYYAIKYAYKNQYEQFYEEELDIRKKLNYPPFNKIIRIIFRSKNEESAKQKCWEFFEKSKEFLQEEIEHLGPSEAIMKKISKNYRYNIIYLSKSYSLLEKLVNKTKEKVKMTSTVYIEIDYYPISLI.

In terms of domain architecture, Helicase ATP-binding spans Ile145 to Met313. An ATP-binding site is contributed by Gly158–Thr165. Residues Asp256 to His259 carry the DEAH box motif. The Zn(2+) site is built by Cys370, Cys373, Cys379, Cys382, Cys397, Cys400, Cys410, and Cys413. The Helicase C-terminal domain maps to Lys405 to Arg557.

It belongs to the helicase family. PriA subfamily. Component of the replication restart primosome. Requires Zn(2+) as cofactor.

It catalyses the reaction Couples ATP hydrolysis with the unwinding of duplex DNA by translocating in the 3'-5' direction.. It carries out the reaction ATP + H2O = ADP + phosphate + H(+). Its function is as follows. Initiates the restart of stalled replication forks, which reloads the replicative helicase on sites other than the origin of replication. Recognizes and binds to abandoned replication forks and remodels them to uncover a helicase loading site. Promotes assembly of the primosome at these replication forks. This is Replication restart protein PriA from Borreliella burgdorferi (strain ATCC 35210 / DSM 4680 / CIP 102532 / B31) (Borrelia burgdorferi).